The sequence spans 302 residues: UDP-3-O-acyl-N-acetylglucosamine deacetylase (302 aa).

The Zn(2+) site is built by His78, His235, and Asp239. Residue His262 is the Proton donor of the active site.

The protein belongs to the LpxC family. Requires Zn(2+) as cofactor.

The enzyme catalyses a UDP-3-O-[(3R)-3-hydroxyacyl]-N-acetyl-alpha-D-glucosamine + H2O = a UDP-3-O-[(3R)-3-hydroxyacyl]-alpha-D-glucosamine + acetate. Its pathway is glycolipid biosynthesis; lipid IV(A) biosynthesis; lipid IV(A) from (3R)-3-hydroxytetradecanoyl-[acyl-carrier-protein] and UDP-N-acetyl-alpha-D-glucosamine: step 2/6. Its function is as follows. Catalyzes the hydrolysis of UDP-3-O-myristoyl-N-acetylglucosamine to form UDP-3-O-myristoylglucosamine and acetate, the committed step in lipid A biosynthesis. In Bdellovibrio bacteriovorus (strain ATCC 15356 / DSM 50701 / NCIMB 9529 / HD100), this protein is UDP-3-O-acyl-N-acetylglucosamine deacetylase.